A 3414-amino-acid chain; its full sequence is Genome polyprotein (3414 aa).

Residues 1-30 (MVKKAILKGKGGGPPRRVSKETATKTRQPR) are disordered. At 1–98 (MVKKAILKGK…LQKRGKRRSA (98 aa)) the chain is on the cytoplasmic side. The propeptide at 97–117 (SATDWMSWLLVITLLGMTIAA) is ER anchor for the capsid protein C, removed in mature form by serine protease NS3. A helical membrane pass occupies residues 99–119 (TDWMSWLLVITLLGMTIAATV). Residues 120–242 (RKERDGSTVI…HLTRVEGWVW (123 aa)) are Extracellular-facing. N-linked (GlcNAc...) asparagine; by host glycosylation is present at Asn144. A helical transmembrane segment spans residues 243 to 260 (KNRLLALAMVTVVWLTLE). Position 261 (Ser261) is a topological domain, cytoplasmic. The helical transmembrane segment at 262 to 280 (VVTRVAVLVVLLCLAPVYA) threads the bilayer. Residues 281-727 (SRCTHLENRD…HTVLGGAFNS (447 aa)) are Extracellular-facing. Intrachain disulfides connect Cys283/Cys310, Cys340/Cys396, Cys340/Cys401, Cys354/Cys385, Cys372/Cys396, and Cys372/Cys401. The segment at 378–391 (DRGWGNHCGLFGKG) is fusion peptide. Asn434 carries an N-linked (GlcNAc...) asparagine; by host glycan. Disulfide bonds link Cys466/Cys570 and Cys587/Cys618. Residues 728–748 (IFGGVGFLPKLLLGVALAWLG) traverse the membrane as a helical segment. Over 749 to 755 (LNMRNPT) the chain is Extracellular. The helical transmembrane segment at 756 to 776 (MSMSFLLAGVLVLAMTLGVGA) threads the bilayer. At 777 to 1132 (DVGCAVDTER…RSMVVADNGE (356 aa)) the chain is on the extracellular side. Intrachain disulfides connect Cys780/Cys791, Cys831/Cys920, Cys955/Cys1000, Cys1057/Cys1106, Cys1068/Cys1090, and Cys1089/Cys1093. Asn861, Asn983, and Asn999 each carry an N-linked (GlcNAc...) asparagine; by host glycan. Residues 1133–1153 (LLSEGGVPGIVALFVVLEYII) traverse the membrane as a helical segment. The Cytoplasmic segment spans residues 1154–1158 (RRRPS). A helical membrane pass occupies residues 1159-1179 (TGSTVVWGGIVVLALLVTGMV). Over 1180–1187 (RMESLVRY) the chain is Lumenal. Residues 1188–1208 (VVAVGITFHLELGPEIVALML) form a helical membrane-spanning segment. Topologically, residues 1209 to 1293 (LQAVFELRVG…LLMALMTQQD (85 aa)) are cytoplasmic. Residues 1294-1314 (VVTVHHGLVCFLSAASACSIW) traverse the membrane as a helical segment. Residues 1315 to 1327 (RLLRGHREQKGLT) are Lumenal-facing. A helical transmembrane segment spans residues 1328–1348 (WIVPLARLLGGEGSGIRLLAF). Residues 1349 to 1359 (WELSAHRGRRS) are Cytoplasmic-facing. A helical membrane pass occupies residues 1360–1377 (FSEPLTVVGVMLTLASGM). Residues 1378–1382 (MRHTS) lie on the Lumenal side of the membrane. The chain crosses the membrane as a helical span at residues 1383-1403 (QEALCALAVASFLLLMLVLGT). Topologically, residues 1404–1454 (RKMQLVAEWSGCVEWHPELVNEGGEVSLRVRQDAMGNFHLTELEKEERMMA) are cytoplasmic. An interacts with and activates NS3 protease region spans residues 1410–1449 (AEWSGCVEWHPELVNEGGEVSLRVRQDAMGNFHLTELEKE). An intramembrane region (helical) is located at residues 1455 to 1475 (FWLIAGLAASAIHWSGIIGVM). The Cytoplasmic segment spans residues 1476 to 2160 (GLWTLTKMLR…RMAERDAPEA (685 aa)). Positions 1490–1669 (SDLVFSGQGG…EAEKSRPNLP (180 aa)) constitute a Peptidase S7 domain. Catalysis depends on charge relay system; for serine protease NS3 activity residues His1543, Asp1567, and Ser1627. The 157-residue stretch at 1675-1831 (TGWTSKGQIT…ESNGAITSEE (157 aa)) folds into the Helicase ATP-binding domain. ATP is bound at residue 1688-1695 (MHPGSGKT). A DEAH box motif is present at residues 1779 to 1782 (DEAH). The Helicase C-terminal domain occupies 1841–2000 (DGFDWITEYE…TLRGPVATFY (160 aa)). N6-acetyllysine; by host is present on Lys1883. The chain crosses the membrane as a helical span at residues 2161–2181 (FLTMVEMMVLGLATLGVIWCF). The Lumenal portion of the chain corresponds to 2182 to 2189 (VVRTSISR). An intramembrane region (helical) is located at residues 2190–2210 (MMLGTLVLLASLLLLWAGGVG). Position 2211 (Tyr2211) is a topological domain, lumenal. The helical transmembrane segment at 2212–2232 (GNMAGVALIFYTLLTVLQPEA) threads the bilayer. Residues 2233–2244 (GKQRSSDDNKLA) are Cytoplasmic-facing. Residues 2245–2265 (YFLLTLCSLAGLVAANEMGFL) form a helical membrane-spanning segment. At 2266–2299 (EKTKADLSTVLWSEREEPRPWSEWTNVDIQPARS) the chain is on the lumenal side. Positions 2300-2320 (WGTYVLVVSLFTPYIIHQLQT) form an intramembrane region, helical. The Lumenal segment spans residues 2321–2343 (KIQQLVNSAVASGAQAMRDLGGG). Residues 2344 to 2364 (APFFGVAGHVMTLGVVSLIGA) constitute an intramembrane region (helical). At 2365-2368 (TPTS) the chain is on the lumenal side. Residues 2369 to 2389 (LMVGVGLAALHLAIVVSGLEA) form a helical membrane-spanning segment. Residues 2390–2432 (ELTQRAHKVFFSAMVRNPMVDGDVINPFGEGEAKPALYERRMS) are Cytoplasmic-facing. Residues 2433–2453 (LVLAIVLCLMSVVMNRTVASI) traverse the membrane as a helical segment. The Lumenal segment spans residues 2454 to 2477 (TEASAVGLAAAGQLLRPEADTLWT). A helical transmembrane segment spans residues 2478-2498 (MPVACGMSGVVRGSLWGFLPL). Topologically, residues 2499-3414 (GHRLWLRASG…WELRLESSII (916 aa)) are cytoplasmic. An mRNA cap 0-1 NS5-type MT domain is found at 2512-2776 (GGSEGDTLGD…ELDLGVGTRC (265 aa)). An S-adenosyl-L-methionine-binding site is contributed by Ser2567. Ser2567 carries the phosphoserine modification. The active-site For 2'-O-MTase activity is Lys2572. S-adenosyl-L-methionine contacts are provided by Gly2597, Trp2598, Thr2615, Ile2616, Asp2642, and Val2643. Asp2657 acts as the For 2'-O-MTase activity in catalysis. An S-adenosyl-L-methionine-binding site is contributed by Ile2658. Catalysis depends on for 2'-O-MTase activity residues Lys2694 and Glu2730. Positions 2730 to 2734 (EMYYS) are interaction with host SCRIB. S-adenosyl-L-methionine is bound at residue Tyr2732. Residues Glu2950, His2954, Cys2959, and Cys2962 each coordinate Zn(2+). The 150-residue stretch at 3040 to 3189 (GLFYADDTAG…RPLDDRFGKA (150 aa)) folds into the RdRp catalytic domain. 3 residues coordinate Zn(2+): His3224, Cys3240, and Cys3359.

In the N-terminal section; belongs to the class I-like SAM-binding methyltransferase superfamily. mRNA cap 0-1 NS5-type methyltransferase family. As to quaternary structure, homodimer. Interacts (via N-terminus) with host EXOC1 (via C-terminus); this interaction results in EXOC1 degradation through the proteasome degradation pathway. In terms of assembly, forms heterodimers with envelope protein E in the endoplasmic reticulum and Golgi. Homodimer; in the endoplasmic reticulum and Golgi. Interacts with protein prM. Interacts with non-structural protein 1. As to quaternary structure, homodimer; Homohexamer when secreted. Interacts with envelope protein E. In terms of assembly, interacts (via N-terminus) with serine protease NS3. Forms a heterodimer with serine protease NS3. May form homooligomers. As to quaternary structure, forms a heterodimer with NS2B. Interacts with NS4B. Interacts with unphosphorylated RNA-directed RNA polymerase NS5; this interaction stimulates RNA-directed RNA polymerase NS5 guanylyltransferase activity. In terms of assembly, interacts with serine protease NS3. Homodimer. Interacts with host STAT2; this interaction inhibits the phosphorylation of the latter, and, when all viral proteins are present (polyprotein), targets STAT2 for degradation. Interacts with serine protease NS3. Interacts with host SCRIB; this interaction targets NS5 to the cell membrane periphery and nucleus, thereby allowing efficient host nuclear STAT1 inhibition. Post-translationally, specific enzymatic cleavages in vivo yield mature proteins. Cleavages in the lumen of endoplasmic reticulum are performed by host signal peptidase, whereas cleavages in the cytoplasmic side are performed by serine protease NS3. Signal cleavage at the 2K-4B site requires a prior NS3 protease-mediated cleavage at the 4A-2K site. Cleaved in post-Golgi vesicles by a host furin, releasing the mature small envelope protein M, and peptide pr. This cleavage is incomplete as up to 30% of viral particles still carry uncleaved prM. In terms of processing, N-glycosylated. Post-translationally, N-glycosylated. The excreted form is glycosylated and this is required for efficient secretion of the protein from infected cells. Acetylated by host KAT5. Acetylation modulates NS3 RNA-binding and unwinding activities and plays an important positive role for viral replication. In terms of processing, phosphorylated on serines residues. This phosphorylation may trigger NS5 nuclear localization.

Its subcellular location is the virion. The protein localises to the host nucleus. The protein resides in the host cytoplasm. It is found in the host perinuclear region. It localises to the secreted. Its subcellular location is the virion membrane. The protein localises to the host endoplasmic reticulum membrane. The enzyme catalyses Selective hydrolysis of -Xaa-Xaa-|-Yaa- bonds in which each of the Xaa can be either Arg or Lys and Yaa can be either Ser or Ala.. The catalysed reaction is RNA(n) + a ribonucleoside 5'-triphosphate = RNA(n+1) + diphosphate. It catalyses the reaction a ribonucleoside 5'-triphosphate + H2O = a ribonucleoside 5'-diphosphate + phosphate + H(+). It carries out the reaction ATP + H2O = ADP + phosphate + H(+). The enzyme catalyses a 5'-end (5'-triphosphoguanosine)-ribonucleoside in mRNA + S-adenosyl-L-methionine = a 5'-end (N(7)-methyl 5'-triphosphoguanosine)-ribonucleoside in mRNA + S-adenosyl-L-homocysteine. The catalysed reaction is a 5'-end (N(7)-methyl 5'-triphosphoguanosine)-ribonucleoside in mRNA + S-adenosyl-L-methionine = a 5'-end (N(7)-methyl 5'-triphosphoguanosine)-(2'-O-methyl-ribonucleoside) in mRNA + S-adenosyl-L-homocysteine + H(+). In terms of biological role, plays a role in virus budding by binding to the cell membrane and gathering the viral RNA into a nucleocapsid that forms the core of a mature virus particle. During virus entry, may induce genome penetration into the host cytoplasm after hemifusion induced by the surface proteins. Can migrate to the cell nucleus where it modulates host functions. Inhibits RNA silencing by interfering with host Dicer. Its function is as follows. Prevents premature fusion activity of envelope proteins in trans-Golgi by binding to envelope protein E at pH6.0. After virion release in extracellular space, gets dissociated from E dimers. Functionally, acts as a chaperone for envelope protein E during intracellular virion assembly by masking and inactivating envelope protein E fusion peptide. prM is the only viral peptide matured by host furin in the trans-Golgi network probably to avoid catastrophic activation of the viral fusion activity in acidic Golgi compartment prior to virion release. prM-E cleavage is inefficient, and many virions are only partially matured. These uncleaved prM would play a role in immune evasion. In terms of biological role, may play a role in virus budding. Exerts cytotoxic effects by activating a mitochondrial apoptotic pathway through M ectodomain. May display a viroporin activity. Binds to host cell surface receptor and mediates fusion between viral and cellular membranes. Envelope protein is synthesized in the endoplasmic reticulum in the form of heterodimer with protein prM. They play a role in virion budding in the ER, and the newly formed immature particle is covered with 60 spikes composed of heterodimer between precursor prM and envelope protein E. The virion is transported to the Golgi apparatus where the low pH causes dissociation of PrM-E heterodimers and formation of E homodimers. prM-E cleavage is inefficient, and many virions are only partially matured. These uncleaved prM would play a role in immune evasion. Its function is as follows. Involved in immune evasion, pathogenesis and viral replication. Once cleaved off the polyprotein, is targeted to three destinations: the viral replication cycle, the plasma membrane and the extracellular compartment. Essential for viral replication. Required for formation of the replication complex and recruitment of other non-structural proteins to the ER-derived membrane structures. Excreted as a hexameric lipoparticle that plays a role against host immune response. Antagonizing the complement function. Binds to the host macrophages and dendritic cells. Inhibits signal transduction originating from Toll-like receptor 3 (TLR3). Functionally, component of the viral RNA replication complex that functions in virion assembly and antagonizes the host immune response. In terms of biological role, required cofactor for the serine protease function of NS3. May have membrane-destabilizing activity and form viroporins. Displays three enzymatic activities: serine protease, NTPase and RNA helicase. NS3 serine protease, in association with NS2B, performs its autocleavage and cleaves the polyprotein at dibasic sites in the cytoplasm: C-prM, NS2A-NS2B, NS2B-NS3, NS3-NS4A, NS4A-2K and NS4B-NS5. NS3 RNA helicase binds RNA and unwinds dsRNA in the 3' to 5' direction. Its function is as follows. Regulates the ATPase activity of the NS3 helicase activity. NS4A allows NS3 helicase to conserve energy during unwinding. Functionally, functions as a signal peptide for NS4B and is required for the interferon antagonism activity of the latter. In terms of biological role, induces the formation of ER-derived membrane vesicles where the viral replication takes place. Inhibits interferon (IFN)-induced host STAT1 phosphorylation and nuclear translocation, thereby preventing the establishment of cellular antiviral state by blocking the IFN-alpha/beta pathway. Inhibits STAT2 translocation in the nucleus after IFN-alpha treatment. Replicates the viral (+) and (-) genome, and performs the capping of genomes in the cytoplasm. NS5 methylates viral RNA cap at guanine N-7 and ribose 2'-O positions. Besides its role in genome replication, also prevents the establishment of cellular antiviral state by blocking the interferon-alpha/beta (IFN-alpha/beta) signaling pathway. Inhibits host TYK2 and STAT2 phosphorylation, thereby preventing activation of JAK-STAT signaling pathway. This is Genome polyprotein from Tick-borne encephalitis virus (strain Hypr) (TBEV).